The primary structure comprises 283 residues: Adenylate dimethylallyltransferase (283 aa).

The protein belongs to the isopentenyl transferase family.

It catalyses the reaction dimethylallyl diphosphate + AMP = N(6)-(dimethylallyl)adenosine 5'-phosphate + diphosphate. Transfers dimethylallyl groups to AMP as part of the biosynthesis of cytokinin phytohormones like isopentenyl adenine or discadenine which controle spore formation and viability. The chain is Adenylate dimethylallyltransferase (iptA) from Dictyostelium discoideum (Social amoeba).